The chain runs to 455 residues: Probable glycine dehydrogenase (decarboxylating) subunit 1 (455 aa).

Belongs to the GcvP family. N-terminal subunit subfamily. As to quaternary structure, the glycine cleavage system is composed of four proteins: P, T, L and H. In this organism, the P 'protein' is a heterodimer of two subunits.

It catalyses the reaction N(6)-[(R)-lipoyl]-L-lysyl-[glycine-cleavage complex H protein] + glycine + H(+) = N(6)-[(R)-S(8)-aminomethyldihydrolipoyl]-L-lysyl-[glycine-cleavage complex H protein] + CO2. Functionally, the glycine cleavage system catalyzes the degradation of glycine. The P protein binds the alpha-amino group of glycine through its pyridoxal phosphate cofactor; CO(2) is released and the remaining methylamine moiety is then transferred to the lipoamide cofactor of the H protein. This is Probable glycine dehydrogenase (decarboxylating) subunit 1 from Francisella tularensis subsp. tularensis (strain FSC 198).